The following is a 561-amino-acid chain: ATP-dependent RNA helicase MRH4, mitochondrial (561 aa).

Residues Met1 to Tyr26 constitute a mitochondrion transit peptide. The segment at Gly29–Asn72 is disordered. Positions Lys50–Asn62 are enriched in basic residues. A Q motif motif is present at residues Ser98 to Lys129. The Helicase ATP-binding domain maps to Thr131–Ala319. An ATP-binding site is contributed by Ala144–Asn151. Residues Ser267–Met270 carry the DEAD box motif. The Helicase C-terminal domain maps to Ala350–Thr539.

Belongs to the DEAD box helicase family. MRH4 subfamily.

The protein resides in the mitochondrion. The enzyme catalyses ATP + H2O = ADP + phosphate + H(+). In terms of biological role, ATP-binding RNA helicase involved in mitochondrial RNA metabolism. Required for maintenance of mitochondrial DNA. The protein is ATP-dependent RNA helicase MRH4, mitochondrial (MRH4) of Saccharomyces cerevisiae (strain YJM789) (Baker's yeast).